The following is a 179-amino-acid chain: Acireductone dioxygenase (179 aa).

Residues 7–26 (MDDAPGDPRQPHRPDPGRPV) are disordered. Fe(2+) is bound by residues H88, H90, E94, and H133. Residues H88, H90, E94, and H133 each coordinate Ni(2+).

This sequence belongs to the acireductone dioxygenase (ARD) family. In terms of assembly, monomer. Interacts with MMP14. It depends on Fe(2+) as a cofactor. The cofactor is Ni(2+). As to expression, detected in heart, colon, lung, stomach, brain, spleen, liver, skeletal muscle and kidney.

The protein resides in the cytoplasm. It localises to the nucleus. It is found in the cell membrane. It catalyses the reaction 1,2-dihydroxy-5-(methylsulfanyl)pent-1-en-3-one + O2 = 4-methylsulfanyl-2-oxobutanoate + formate + 2 H(+). The enzyme catalyses 1,2-dihydroxy-5-(methylsulfanyl)pent-1-en-3-one + O2 = 3-(methylsulfanyl)propanoate + CO + formate + 2 H(+). It participates in amino-acid biosynthesis; L-methionine biosynthesis via salvage pathway; L-methionine from S-methyl-5-thio-alpha-D-ribose 1-phosphate: step 5/6. Its function is as follows. Catalyzes 2 different reactions between oxygen and the acireductone 1,2-dihydroxy-3-keto-5-methylthiopentene (DHK-MTPene) depending upon the metal bound in the active site. Fe-containing acireductone dioxygenase (Fe-ARD) produces formate and 2-keto-4-methylthiobutyrate (KMTB), the alpha-ketoacid precursor of methionine in the methionine recycle pathway. Ni-containing acireductone dioxygenase (Ni-ARD) produces methylthiopropionate, carbon monoxide and formate, and does not lie on the methionine recycle pathway. Also down-regulates cell migration mediated by MMP14. Necessary for hepatitis C virus replication in an otherwise non-permissive cell line. The protein is Acireductone dioxygenase of Homo sapiens (Human).